The sequence spans 274 residues: Ethanolamine ammonia-lyase small subunit (274 aa).

Adenosylcob(III)alamin is bound by residues valine 161, glutamate 182, and cysteine 211.

It belongs to the EutC family. The basic unit is a heterodimer which dimerizes to form tetramers. The heterotetramers trimerize; 6 large subunits form a core ring with 6 small subunits projecting outwards. Adenosylcob(III)alamin is required as a cofactor.

The protein localises to the bacterial microcompartment. The enzyme catalyses ethanolamine = acetaldehyde + NH4(+). The protein operates within amine and polyamine degradation; ethanolamine degradation. Catalyzes the deamination of various vicinal amino-alcohols to oxo compounds. Allows this organism to utilize ethanolamine as the sole source of nitrogen and carbon in the presence of external vitamin B12. The sequence is that of Ethanolamine ammonia-lyase small subunit from Pseudomonas fluorescens (strain ATCC BAA-477 / NRRL B-23932 / Pf-5).